The sequence spans 114 residues: MYTKIALLGLVGSAAAFNAPMMTVRRDAIATGAAAAVVAPMLRPAGAAMKKDSKAPCVEVFDERDGCKAAGTQKASGDDGFCVKVSMKAIGFNAAEAASVTKNYGIKRFGAKSV.

The (2R,3E)-phycoerythrobilin site is built by Asp-52, Ser-53, Glu-63, Arg-64, Cys-67, Thr-72, Lys-74, Ala-75, and Lys-84.

Belongs to the phycoerythrin family. As to quaternary structure, heterotetramer of 2 different alpha chains and 2 identical beta chains which form 2 alpha-beta heterodimers within the heterotetramer. The two alpha-beta heterodimers are rotated to an open configuration in contrast to the closed configuration found in other cryptophyte species due to the insertion of a single amino acid, Asp-65, in a conserved region of the alpha chain. In the open form, the central chromophores are not in physical contact but are separated by a water-filled channel. In terms of processing, contains three phycoerythrobilin chromophores with binding mediated by both the alpha and beta subunits.

It localises to the plastid. The protein resides in the chloroplast thylakoid membrane. Functionally, light-harvesting photosynthetic tetrapyrrole chromophore-protein from the phycobiliprotein complex. The sequence is that of Phycoerythrin alpha-1 subunit from Hemiselmis andersenii (Cryptophyte alga).